We begin with the raw amino-acid sequence, 375 residues long: Elongation factor Tu (375 aa).

The region spanning 10–205 (KPHINVGAIG…TMDKYFVIPE (196 aa)) is the tr-type G domain. Residues 19 to 26 (GHVDHGKT) form a G1 region. A GTP-binding site is contributed by 19 to 26 (GHVDHGKT). A Mg(2+)-binding site is contributed by Thr26. A G2 region spans residues 60-64 (GITIN). The G3 stretch occupies residues 81 to 84 (DCPG). GTP is bound by residues 81–85 (DCPGH) and 136–139 (NKMD). Residues 136–139 (NKMD) are G4. The segment at 173 to 175 (SAF) is G5.

Belongs to the TRAFAC class translation factor GTPase superfamily. Classic translation factor GTPase family. EF-Tu/EF-1A subfamily. As to quaternary structure, monomer.

The protein resides in the cytoplasm. It carries out the reaction GTP + H2O = GDP + phosphate + H(+). In terms of biological role, GTP hydrolase that promotes the GTP-dependent binding of aminoacyl-tRNA to the A-site of ribosomes during protein biosynthesis. The polypeptide is Elongation factor Tu (tuf) (Spirochaeta aurantia).